A 597-amino-acid polypeptide reads, in one-letter code: Sodium/mannose cotransporter SLC5A10 (597 aa).

At Met-1–Gln-16 the chain is on the extracellular side. The N-linked (GlcNAc...) asparagine glycan is linked to Asn-5. A helical transmembrane segment spans residues Leu-17–Ile-37. The Cytoplasmic segment spans residues Trp-38–Gly-73. The chain crosses the membrane as a helical span at residues Ser-74 to Phe-94. Residues Glu-95–Tyr-100 lie on the Extracellular side of the membrane. Asn-97 carries N-linked (GlcNAc...) asparagine glycosylation. The chain crosses the membrane as a helical span at residues Val-101 to Met-121. Residues Pro-122–Ser-139 lie on the Cytoplasmic side of the membrane. Residues Val-140 to Val-162 form a helical membrane-spanning segment. Residues His-163–Thr-174 lie on the Extracellular side of the membrane. The chain crosses the membrane as a helical span at residues Val-175–Tyr-195. The Cytoplasmic segment spans residues Thr-196–Thr-201. The chain crosses the membrane as a helical span at residues Leu-202–Tyr-222. The Extracellular segment spans residues Glu-223–Thr-265. A helical membrane pass occupies residues Gly-266 to Val-286. The Cytoplasmic portion of the chain corresponds to Gln-287–Gly-301. Residues Ser-302 to Ile-322 form a helical membrane-spanning segment. At Ser-323–Arg-367 the chain is on the extracellular side. The helical transmembrane segment at Gly-368–Ser-388 threads the bilayer. The Cytoplasmic portion of the chain corresponds to Ser-389–Leu-410. Residues Leu-411 to Val-431 traverse the membrane as a helical segment. At Leu-432–Met-444 the chain is on the extracellular side. The helical transmembrane segment at Gln-445–Trp-465 threads the bilayer. The Cytoplasmic segment spans residues Arg-466–Gly-472. Residues Ala-473 to Leu-493 form a helical membrane-spanning segment. The Extracellular portion of the chain corresponds to His-494–Tyr-514. A helical membrane pass occupies residues Leu-515 to Leu-535. Over Thr-536–Arg-576 the chain is Cytoplasmic. The helical transmembrane segment at Val-577 to Ala-597 threads the bilayer.

This sequence belongs to the sodium:solute symporter (SSF) (TC 2.A.21) family. As to expression, predominantyl expressed in kidney. Also detected at very low levels in testes, skeletal muscle, and spleen.

Its subcellular location is the apical cell membrane. The enzyme catalyses D-mannose(out) + Na(+)(out) = D-mannose(in) + Na(+)(in). It carries out the reaction D-fructopyranose(out) + Na(+)(out) = D-fructopyranose(in) + Na(+)(in). Functionally, electrogenic Na+-coupled sugar symporter that actively transports D-mannose or D-fructose at the plasma membrane, with a Na+ to sugar coupling ratio of 1:1. Transporter activity is driven by a transmembrane Na+ electrochemical gradient set by the Na+/K+ pump. Exclusively recognizes sugar substrates having a pyranose ring with an axial hydroxyl group on carbon 2. Has likely evolved to enable renal reabsorption of D-mannose, an important constituent of oligosaccharide chains of glycoproteins. Contributes to dietary D-fructose reabsorption from glomerular filtrate across the brush border of the kidney. This Bos taurus (Bovine) protein is Sodium/mannose cotransporter SLC5A10 (SLC5A10).